The primary structure comprises 180 residues: Pro-glucagon (180 aa).

Positions 1 to 20 are cleaved as a signal peptide; the sequence is MKTVYIVAGLFVMLVQGSWQ. The disordered stretch occupies residues 23 to 59; sequence PQDTEENARSFPASQTEPLEDPDQINEDKRHSQGTFT. Ser54 carries the phosphoserine modification. The propeptide occupies 84–89; that stretch reads NRNNIA. Residues Ser105 and Ser108 each carry the phosphoserine modification. Arg127 carries the post-translational modification Arginine amide. Residues 131-145 constitute a propeptide that is removed on maturation; that stretch reads DFPEEVAIAEELGRR. Phosphoserine is present on residues Ser150 and Ser152.

It belongs to the glucagon family. Post-translationally, proglucagon is post-translationally processed in a tissue-specific manner in pancreatic A cells and intestinal L cells. In pancreatic A cells, the major bioactive hormone is glucagon cleaved by PCSK2/PC2. In the intestinal L cells PCSK1/PC1 liberates GLP-1, GLP-2, glicentin and oxyntomodulin. GLP-1 is further N-terminally truncated by post-translational processing in the intestinal L cells resulting in GLP-1(7-37) GLP-1-(7-36)amide. The C-terminal amidation is neither important for the metabolism of GLP-1 nor for its effects on the endocrine pancreas. As to expression, glucagon is secreted in the A cells of the islets of Langerhans. GLP-1, GLP-2, oxyntomodulin and glicentin are secreted from enteroendocrine cells throughout the gastrointestinal tract.

The protein resides in the secreted. Plays a key role in glucose metabolism and homeostasis. Regulates blood glucose by increasing gluconeogenesis and decreasing glycolysis. A counterregulatory hormone of insulin, raises plasma glucose levels in response to insulin-induced hypoglycemia. Plays an important role in initiating and maintaining hyperglycemic conditions in diabetes. In terms of biological role, potent stimulator of glucose-dependent insulin release. Also stimulates insulin release in response to IL6. Plays important roles on gastric motility and the suppression of plasma glucagon levels. May be involved in the suppression of satiety and stimulation of glucose disposal in peripheral tissues, independent of the actions of insulin. Has growth-promoting activities on intestinal epithelium. May also regulate the hypothalamic pituitary axis (HPA) via effects on LH, TSH, CRH, oxytocin, and vasopressin secretion. Increases islet mass through stimulation of islet neogenesis and pancreatic beta cell proliferation. Inhibits beta cell apoptosis. Functionally, stimulates intestinal growth and up-regulates villus height in the small intestine, concomitant with increased crypt cell proliferation and decreased enterocyte apoptosis. The gastrointestinal tract, from the stomach to the colon is the principal target for GLP-2 action. Plays a key role in nutrient homeostasis, enhancing nutrient assimilation through enhanced gastrointestinal function, as well as increasing nutrient disposal. Stimulates intestinal glucose transport and decreases mucosal permeability. Its function is as follows. May modulate gastric acid secretion and the gastro-pyloro-duodenal activity. May play an important role in intestinal mucosal growth in the early period of life. Oxyntomodulin significantly reduces food intake. This chain is Pro-glucagon (Gcg), found in Rattus norvegicus (Rat).